The following is a 599-amino-acid chain: MFS-type transporter ucsM (599 aa).

Positions 23 to 34 (AHHHGKEREAHR) are enriched in basic and acidic residues. A disordered region spans residues 23 to 42 (AHHHGKEREAHRQSLSSVPG). 8 helical membrane passes run 147-167 (VALG…GAWL), 178-198 (ILIG…GAVP), 204-224 (GKGT…AGLF), 263-283 (IMLI…ATVY), 291-311 (WLAF…LWYL), 386-406 (IFLY…ILPS), 424-444 (FNPI…YPAL), and 454-474 (ISRI…SSLV). A glycan (N-linked (GlcNAc...) asparagine) is linked at N517. 2 helical membrane passes run 539-559 (LFLF…PAIV) and 563-583 (LVWV…IFWV).

It belongs to the major facilitator superfamily. Proton-dependent oligopeptide transporter (POT/PTR) (TC 2.A.17) family.

Its subcellular location is the membrane. Its function is as follows. MFS-type transporter; part of the gene cluster that mediates the biosynthesis of UCS1025A, a member of the pyrrolizidinone family that acts as a strong telomerase inhibitor and displays potent antibacterial and antitumor properties. These compounds share a hemiaminal-containing pyrrolizidinone core fused with a gamma-lactone, giving a furopyrrolizidine that is connected to a decalin fragment. This is MFS-type transporter ucsM from Acremonium sp.